The primary structure comprises 830 residues: Leucine--tRNA ligase (830 aa).

The 'HIGH' region signature appears at 48–58 (PYPSGAIHMGH). The 'KMSKS' region signature appears at 596–600 (KMSKS). Position 599 (lysine 599) interacts with ATP.

This sequence belongs to the class-I aminoacyl-tRNA synthetase family.

It localises to the cytoplasm. It catalyses the reaction tRNA(Leu) + L-leucine + ATP = L-leucyl-tRNA(Leu) + AMP + diphosphate. The chain is Leucine--tRNA ligase from Helicobacter hepaticus (strain ATCC 51449 / 3B1).